A 2498-amino-acid polypeptide reads, in one-letter code: PKS-NRPS hybrid synthetase acdB (2498 aa).

The interval 34–427 (FEQAAHAHFD…GRADSQVKIR (394 aa)) is adenylation (A) domain. In terms of domain architecture, Carrier 1 spans 531 to 606 (QPATELERDI…SLAGYLMDMD (76 aa)). Ser566 is subject to O-(pantetheine 4'-phosphoryl)serine. In terms of domain architecture, Ketosynthase family 3 (KS3) spans 627–1058 (SDDIAVVSMA…GTNAHVIVEE (432 aa)). Active-site for beta-ketoacyl synthase activity residues include Cys802, His938, and His979. A malonyl-CoA:ACP transacylase (MAT) domain region spans residues 1165 to 1485 (LFAGQGSQQL…EILARLHVQH (321 aa)). The segment at 1739 to 1917 (GAVLITGGLS…PAVCVAYGPL (179 aa)) is ketoreductase (KR) domain. Residues 2017–2092 (EILLRTIQEA…ELSRYLLPQL (76 aa)) enclose the Carrier 2 domain. Ser2052 is subject to O-(pantetheine 4'-phosphoryl)serine. Residues 2149–2378 (VTGATEFVGA…FPVDYVCRTI (230 aa)) are thioester reductase (TE) domain.

It in the C-terminal section; belongs to the NRP synthetase family. Pantetheine 4'-phosphate serves as cofactor.

The protein operates within secondary metabolite biosynthesis. In terms of biological role, PKS-NRPS hybrid synthetase; part of the gene cluster that mediates the biosynthesis of aspcandine, a pyrrolobenzazepine alkaloid. Initially, the indoleamine 2,3-dioxygenase acdA accepts L-tryptophan and performs the oxidative opening of the indole ring to yield N'-formyl-L-kynurenine, which undergoes the spontaneous deformylation reaction to provide L-kynurenine. The kynurenine 3-monooxygenase acdD then hydroxylates L-kynurenine to afford 3-hydroxy-L-kynurenine. 3-hydroxy-L-kynurenine is activated by the A domain of the NRPS-PKS acdB and subsequently loaded onto the enzyme. The KS domain conducts the decarboxylative condensation of the 3-hydroxy-L-kynurenyl and malonyl moieties, and subsequent nucleophilic attacks by the two amino groups would occur nonenzymatically at two distinct positions, achieving the chain release and the construction of the tricyclic system. Finally, a dehydration reaction completes the biosynthesis to yield aspcandine. This is PKS-NRPS hybrid synthetase acdB from Aspergillus candidus.